The following is a 114-amino-acid chain: UPF0342 protein SE_1526 (114 aa).

The protein belongs to the UPF0342 family.

The protein is UPF0342 protein SE_1526 of Staphylococcus epidermidis (strain ATCC 12228 / FDA PCI 1200).